The sequence spans 425 residues: Riboflavin biosynthesis protein RibBA (425 aa).

Positions Met-1–Lys-204 are DHBP synthase. D-ribulose 5-phosphate is bound by residues Arg-28 to Glu-29, Asp-33, Arg-141 to Thr-145, and Glu-165. Glu-29 contacts Mg(2+). Residue His-144 participates in Mg(2+) binding. A GTP cyclohydrolase II region spans residues His-205–Leu-425. Arg-259–Glu-263 provides a ligand contact to GTP. Residues Cys-264, Cys-275, and Cys-277 each coordinate Zn(2+). GTP is bound by residues Gln-280, Glu-303–Arg-305, and Thr-325. The Proton acceptor; for GTP cyclohydrolase activity role is filled by Asp-337. Arg-339 functions as the Nucleophile; for GTP cyclohydrolase activity in the catalytic mechanism. GTP contacts are provided by Thr-360 and Lys-365.

This sequence in the N-terminal section; belongs to the DHBP synthase family. The protein in the C-terminal section; belongs to the GTP cyclohydrolase II family. Requires Mg(2+) as cofactor. Mn(2+) serves as cofactor. The cofactor is Zn(2+).

It carries out the reaction D-ribulose 5-phosphate = (2S)-2-hydroxy-3-oxobutyl phosphate + formate + H(+). The enzyme catalyses GTP + 4 H2O = 2,5-diamino-6-hydroxy-4-(5-phosphoribosylamino)-pyrimidine + formate + 2 phosphate + 3 H(+). It functions in the pathway cofactor biosynthesis; riboflavin biosynthesis; 2-hydroxy-3-oxobutyl phosphate from D-ribulose 5-phosphate: step 1/1. Its pathway is cofactor biosynthesis; riboflavin biosynthesis; 5-amino-6-(D-ribitylamino)uracil from GTP: step 1/4. In terms of biological role, catalyzes the conversion of D-ribulose 5-phosphate to formate and 3,4-dihydroxy-2-butanone 4-phosphate. Functionally, catalyzes the conversion of GTP to 2,5-diamino-6-ribosylamino-4(3H)-pyrimidinone 5'-phosphate (DARP), formate and pyrophosphate. This Mycobacterium avium (strain 104) protein is Riboflavin biosynthesis protein RibBA.